A 671-amino-acid polypeptide reads, in one-letter code: DNA ligase (671 aa).

NAD(+) contacts are provided by residues Asp-32 to Asp-36, Ser-81 to Leu-82, and Glu-113. Residue Lys-115 is the N6-AMP-lysine intermediate of the active site. Residues Arg-136, Glu-173, Lys-290, and Lys-314 each contribute to the NAD(+) site. Zn(2+) contacts are provided by Cys-408, Cys-411, Cys-426, and Cys-432. The BRCT domain maps to Glu-593–Val-671.

Belongs to the NAD-dependent DNA ligase family. LigA subfamily. Requires Mg(2+) as cofactor. Mn(2+) serves as cofactor.

The enzyme catalyses NAD(+) + (deoxyribonucleotide)n-3'-hydroxyl + 5'-phospho-(deoxyribonucleotide)m = (deoxyribonucleotide)n+m + AMP + beta-nicotinamide D-nucleotide.. In terms of biological role, DNA ligase that catalyzes the formation of phosphodiester linkages between 5'-phosphoryl and 3'-hydroxyl groups in double-stranded DNA using NAD as a coenzyme and as the energy source for the reaction. It is essential for DNA replication and repair of damaged DNA. This Salmonella arizonae (strain ATCC BAA-731 / CDC346-86 / RSK2980) protein is DNA ligase.